The following is a 544-amino-acid chain: Cytochrome P450 monooxygenase notG' (544 aa).

Positions 1–22 (MELPFSAMSLLYLLVGIAGVIS) are cleaved as a signal peptide. 2 helical membrane passes run 42 to 62 (WYTL…GLPL) and 66 to 86 (AKAT…SLLL). 2 N-linked (GlcNAc...) asparagine glycosylation sites follow: Asn226 and Asn404. Cys487 serves as a coordination point for heme.

The protein belongs to the cytochrome P450 family. Heme is required as a cofactor.

The protein localises to the membrane. Its pathway is alkaloid biosynthesis. In terms of biological role, cytochrome P450 monooxygenase; part of the gene cluster that mediates the biosynthesis of notoamide, a fungal indole alkaloid that belongs to a family of natural products containing a characteristic bicyclo[2.2.2]diazaoctane core. The first step of notoamide biosynthesis involves coupling of L-proline and L-tryptophan by the bimodular NRPS notE', to produce cyclo-L-tryptophan-L-proline called brevianamide F. The reverse prenyltransferase notF' then acts as a deoxybrevianamide E synthase and converts brevianamide F to deoxybrevianamide E via reverse prenylation at C-2 of the indole ring leading to the bicyclo[2.2.2]diazaoctane core. Deoxybrevianamide E is further hydroxylated at C-6 of the indole ring, likely catalyzed by the cytochrome P450 monooxygenase notG', to yield 6-hydroxy-deoxybrevianamide E. 6-hydroxy-deoxybrevianamide E is a specific substrate of the prenyltransferase notC' for normal prenylation at C-7 to produce 6-hydroxy-7-prenyl-deoxybrevianamide, also called notoamide S. As the proposed pivotal branching point in notoamide biosynthesis, notoamide S can be diverted to notoamide E through an oxidative pyran ring closure putatively catalyzed by either notH' cytochrome P450 monooxygenase or the notD' FAD-linked oxidoreductase. This step would be followed by an indole 2,3-epoxidation-initiated pinacol-like rearrangement catalyzed by the notB' FAD-dependent monooxygenase leading to the formation of notoamide C and notoamide D. On the other hand notoamide S is converted to notoamide T by notH' (or notD'), a bifunctional oxidase that also functions as the intramolecular Diels-Alderase responsible for generation of (-)-notoamide T. To generate antipodal (+)-notoaminide T, notH (or notD) in Aspergillus strain MF297-2 is expected to catalyze a Diels-Alder reaction leading to the opposite stereochemistry. The remaining oxidoreductase notD' (or notH') likely catalyzes the oxidative pyran ring formation to yield (-)-stephacidin A. The FAD-dependent monooxygenase notI' is highly similar to notB' and is predicted to catalyze a similar conversion from (-)-stephacidin A to (+)-notoamide B via the 2,3-epoxidation of (-)-stephacidin A followed by a pinacol-type rearrangement. Finally, it remains unclear which enzyme could be responsible for the final hydroxylation steps leading to notoamide A and sclerotiamide. This chain is Cytochrome P450 monooxygenase notG', found in Aspergillus versicolor.